We begin with the raw amino-acid sequence, 308 residues long: Testis-specific Y-encoded protein 1 (308 aa).

It belongs to the nucleosome assembly protein (NAP) family. Phosphorylated. Specifically expressed in testicular tissues. Isoform 1 and isoform 2 are expressed in spermatogonia and spermatocytes. Found in early testicular carcinoma in situ, spermatogonial cells in testicular tissues of 46,X,Y female and in prostate cancer cell lines.

The protein resides in the cytoplasm. Its subcellular location is the nucleus. Its function is as follows. May be involved in sperm differentiation and proliferation. This chain is Testis-specific Y-encoded protein 1 (TSPY1), found in Homo sapiens (Human).